We begin with the raw amino-acid sequence, 114 residues long: PDZK1-interacting protein 1 (114 aa).

Topologically, residues 1-28 are extracellular; that stretch reads MSALSLVILGLLMAVPPASCQQGLGNLQ. Residues 29-51 form a helical membrane-spanning segment; sequence PWMQGLIAVAVFLVLVAIAFAIN. The Cytoplasmic portion of the chain corresponds to 52–114; the sequence is HFWCQEEREP…EEGRVHSTPM (63 aa). Ser85 is modified (phosphoserine). Positions 92–114 are disordered; the sequence is SNEHENAYENTSEEEGRVHSTPM. Positions 105–114 are enriched in basic and acidic residues; the sequence is EEGRVHSTPM.

This sequence belongs to the PDZK1-interacting protein 1/SMIM24 family. As to quaternary structure, forms a heterodimer (via N-terminal transmembrane helix) with SLC5A2/SGLT2 (via TM13); this interaction enhances SLC5A2 transporter activity. Interacts with PDZK1.

It is found in the apical cell membrane. In terms of biological role, auxiliary protein of electrogenic Na(+)-coupled sugar symporter SLC5A2/SGLT2 and SLC5A1/SGLT1. Essential for the transporter activity of SLC5A2/SGLT2 but not SLC5A1/SGLT1. This is PDZK1-interacting protein 1 from Sus scrofa (Pig).